The chain runs to 313 residues: Porphobilinogen deaminase (313 aa).

S-(dipyrrolylmethanemethyl)cysteine is present on C242.

The protein belongs to the HMBS family. As to quaternary structure, monomer. Dipyrromethane is required as a cofactor.

The enzyme catalyses 4 porphobilinogen + H2O = hydroxymethylbilane + 4 NH4(+). It functions in the pathway porphyrin-containing compound metabolism; protoporphyrin-IX biosynthesis; coproporphyrinogen-III from 5-aminolevulinate: step 2/4. Functionally, tetrapolymerization of the monopyrrole PBG into the hydroxymethylbilane pre-uroporphyrinogen in several discrete steps. The protein is Porphobilinogen deaminase of Pseudomonas entomophila (strain L48).